The chain runs to 209 residues: Uracil phosphoribosyltransferase (209 aa).

Residues arginine 79, arginine 104, and 131–139 (DPMLATGGS) each bind 5-phospho-alpha-D-ribose 1-diphosphate. Uracil-binding positions include isoleucine 194 and 199–201 (GDA). Aspartate 200 is a 5-phospho-alpha-D-ribose 1-diphosphate binding site.

This sequence belongs to the UPRTase family. It depends on Mg(2+) as a cofactor.

It catalyses the reaction UMP + diphosphate = 5-phospho-alpha-D-ribose 1-diphosphate + uracil. It functions in the pathway pyrimidine metabolism; UMP biosynthesis via salvage pathway; UMP from uracil: step 1/1. With respect to regulation, allosterically activated by GTP. In terms of biological role, catalyzes the conversion of uracil and 5-phospho-alpha-D-ribose 1-diphosphate (PRPP) to UMP and diphosphate. This chain is Uracil phosphoribosyltransferase, found in Citrifermentans bemidjiense (strain ATCC BAA-1014 / DSM 16622 / JCM 12645 / Bem) (Geobacter bemidjiensis).